Consider the following 442-residue polypeptide: Armadillo-like helical domain containing protein 1 (442 aa).

The protein is Armadillo-like helical domain containing protein 1 of Bos taurus (Bovine).